The chain runs to 122 residues: Fluoride-specific ion channel FluC (122 aa).

Helical transmembrane passes span 6–26, 33–53, 60–80, and 101–121; these read LVVG…INLV, SISF…GLLF, GLSP…FTTF, and LNII…FLIF. Gly-75 and Thr-78 together coordinate Na(+).

Belongs to the fluoride channel Fluc/FEX (TC 1.A.43) family.

It is found in the cell inner membrane. It catalyses the reaction fluoride(in) = fluoride(out). With respect to regulation, na(+) is not transported, but it plays an essential structural role and its presence is essential for fluoride channel function. In terms of biological role, fluoride-specific ion channel. Important for reducing fluoride concentration in the cell, thus reducing its toxicity. This is Fluoride-specific ion channel FluC from Campylobacter jejuni subsp. jejuni serotype O:2 (strain ATCC 700819 / NCTC 11168).